The chain runs to 107 residues: MSVSQVTDASFKQEVINNNLPVLVDFWAPWCGPCRMVSPVVDEIAEEYESSIKVVKINTDDNPTIAAEYGIRSIPTLMIFKAGERVDTVIGAVPKSTLASTLNKYIS.

One can recognise a Thioredoxin domain in the interval 2-107 (SVSQVTDASF…LASTLNKYIS (106 aa)). Active-site nucleophile residues include Cys31 and Cys34. Cys31 and Cys34 are oxidised to a cystine.

Belongs to the thioredoxin family.

Its subcellular location is the plastid. The protein resides in the chloroplast. Its function is as follows. Participates in various redox reactions through the reversible oxidation of its active center dithiol to a disulfide and catalyzes dithiol-disulfide exchange reactions. The chain is Thioredoxin (trxA) from Pyropia yezoensis (Susabi-nori).